A 124-amino-acid chain; its full sequence is Fluoride-specific ion channel FluC (124 aa).

The next 4 membrane-spanning stretches (helical) occupy residues 4–24, 35–55, 62–82, and 102–122; these read LIFV…ISIF, FGTL…YALG, PEIK…FSTF, and IALN…LVFS. Na(+)-binding residues include Gly74 and Thr77.

This sequence belongs to the fluoride channel Fluc/FEX (TC 1.A.43) family.

It is found in the cell inner membrane. It carries out the reaction fluoride(in) = fluoride(out). Its activity is regulated as follows. Na(+) is not transported, but it plays an essential structural role and its presence is essential for fluoride channel function. Functionally, fluoride-specific ion channel. Important for reducing fluoride concentration in the cell, thus reducing its toxicity. This Shewanella loihica (strain ATCC BAA-1088 / PV-4) protein is Fluoride-specific ion channel FluC.